A 170-amino-acid polypeptide reads, in one-letter code: Group 2 truncated hemoglobin 3-1 (170 aa).

Histidine 98 provides a ligand contact to heme b.

The protein belongs to the truncated hemoglobin family. Group II subfamily. In terms of assembly, homodimer when ferric.

Hemoglobin-like protein that exhibits an unusual concentration-independent binding of O(2) and CO. Required for general plant development and during nodulation. May promote shoot organogenesis from root explants. This is Group 2 truncated hemoglobin 3-1 from Medicago truncatula (Barrel medic).